The chain runs to 504 residues: ATP synthase subunit alpha (504 aa).

171-178 (GDRQTGKT) contacts ATP.

Belongs to the ATPase alpha/beta chains family. In terms of assembly, F-type ATPases have 2 components, CF(1) - the catalytic core - and CF(0) - the membrane proton channel. CF(1) has five subunits: alpha(3), beta(3), gamma(1), delta(1), epsilon(1). CF(0) has three main subunits: a(1), b(2) and c(9-12). The alpha and beta chains form an alternating ring which encloses part of the gamma chain. CF(1) is attached to CF(0) by a central stalk formed by the gamma and epsilon chains, while a peripheral stalk is formed by the delta and b chains.

It is found in the cell inner membrane. It catalyses the reaction ATP + H2O + 4 H(+)(in) = ADP + phosphate + 5 H(+)(out). Its function is as follows. Produces ATP from ADP in the presence of a proton gradient across the membrane. The alpha chain is a regulatory subunit. The protein is ATP synthase subunit alpha of Sulfurovum sp. (strain NBC37-1).